The primary structure comprises 467 residues: UDP-N-acetylmuramate--L-alanine ligase (467 aa).

114-120 lines the ATP pocket; the sequence is GTHGKTT.

This sequence belongs to the MurCDEF family.

The protein resides in the cytoplasm. The enzyme catalyses UDP-N-acetyl-alpha-D-muramate + L-alanine + ATP = UDP-N-acetyl-alpha-D-muramoyl-L-alanine + ADP + phosphate + H(+). It functions in the pathway cell wall biogenesis; peptidoglycan biosynthesis. Its function is as follows. Cell wall formation. This is UDP-N-acetylmuramate--L-alanine ligase from Nitrobacter hamburgensis (strain DSM 10229 / NCIMB 13809 / X14).